Reading from the N-terminus, the 83-residue chain is Large ribosomal subunit protein bL27 (83 aa).

The segment at 1–20 is disordered; it reads MAHKKGASSSRNGRDSNPQY. The span at 7–19 shows a compositional bias: polar residues; the sequence is ASSSRNGRDSNPQ.

The protein belongs to the bacterial ribosomal protein bL27 family.

The polypeptide is Large ribosomal subunit protein bL27 (Bifidobacterium animalis subsp. lactis (strain AD011)).